Reading from the N-terminus, the 83-residue chain is Parvalbumin beta 3 (83 aa).

2 EF-hand domains span residues 13-48 and 52-83; these read KSND…FSAG and LTAG…LVKA. 11 residues coordinate Ca(2+): aspartate 26, aspartate 28, serine 30, phenylalanine 32, glutamate 34, glutamate 37, aspartate 65, aspartate 67, aspartate 69, methionine 71, and glutamate 76.

It belongs to the parvalbumin family.

Its function is as follows. In muscle, parvalbumin is thought to be involved in relaxation after contraction. It binds two calcium ions. The protein is Parvalbumin beta 3 of Macruronus novaezelandiae (Blue grenadier).